The chain runs to 458 residues: Exodeoxyribonuclease 7 large subunit (458 aa).

It belongs to the XseA family. Heterooligomer composed of large and small subunits.

It is found in the cytoplasm. The enzyme catalyses Exonucleolytic cleavage in either 5'- to 3'- or 3'- to 5'-direction to yield nucleoside 5'-phosphates.. In terms of biological role, bidirectionally degrades single-stranded DNA into large acid-insoluble oligonucleotides, which are then degraded further into small acid-soluble oligonucleotides. This Shouchella clausii (strain KSM-K16) (Alkalihalobacillus clausii) protein is Exodeoxyribonuclease 7 large subunit.